The primary structure comprises 279 residues: 3-methyl-2-oxobutanoate hydroxymethyltransferase (279 aa).

Residues aspartate 53 and aspartate 92 each coordinate Mg(2+). Residues 53–54 (DS), aspartate 92, and lysine 122 contribute to the 3-methyl-2-oxobutanoate site. Glutamate 124 contacts Mg(2+). Glutamate 191 serves as the catalytic Proton acceptor.

The protein belongs to the PanB family. In terms of assembly, homodecamer; pentamer of dimers. Mg(2+) is required as a cofactor.

The protein resides in the cytoplasm. It catalyses the reaction 3-methyl-2-oxobutanoate + (6R)-5,10-methylene-5,6,7,8-tetrahydrofolate + H2O = 2-dehydropantoate + (6S)-5,6,7,8-tetrahydrofolate. Its pathway is cofactor biosynthesis; (R)-pantothenate biosynthesis; (R)-pantoate from 3-methyl-2-oxobutanoate: step 1/2. Functionally, catalyzes the reversible reaction in which hydroxymethyl group from 5,10-methylenetetrahydrofolate is transferred onto alpha-ketoisovalerate to form ketopantoate. In Maricaulis maris (strain MCS10) (Caulobacter maris), this protein is 3-methyl-2-oxobutanoate hydroxymethyltransferase.